A 202-amino-acid chain; its full sequence is Dephospho-CoA kinase (202 aa).

One can recognise a DPCK domain in the interval Ile5–Pro202. Residue Ala13–Ala18 coordinates ATP.

Belongs to the CoaE family.

It is found in the cytoplasm. The catalysed reaction is 3'-dephospho-CoA + ATP = ADP + CoA + H(+). It functions in the pathway cofactor biosynthesis; coenzyme A biosynthesis; CoA from (R)-pantothenate: step 5/5. Its function is as follows. Catalyzes the phosphorylation of the 3'-hydroxyl group of dephosphocoenzyme A to form coenzyme A. This Xanthomonas axonopodis pv. citri (strain 306) protein is Dephospho-CoA kinase.